Reading from the N-terminus, the 68-residue chain is Conotoxin TsMMSK-021 (68 aa).

A signal peptide spans Met1 to Ala20. Positions Val21–Arg52 are excised as a propeptide. 3 disulfides stabilise this stretch: Cys53–Cys66, Cys54–Cys62, and Cys58–Cys65. Pro64 carries the 4-hydroxyproline modification.

It belongs to the conotoxin M superfamily. As to expression, expressed by the venom duct.

Its subcellular location is the secreted. This Conus tessulatus (Tessellate cone) protein is Conotoxin TsMMSK-021.